Reading from the N-terminus, the 306-residue chain is Curved DNA-binding protein (306 aa).

Positions 5–69 constitute a J domain; sequence DYYAIMGVKP…QRRAEYDQMW (65 aa).

The protein resides in the cytoplasm. It localises to the nucleoid. Functionally, DNA-binding protein that preferentially recognizes a curved DNA sequence. It is probably a functional analog of DnaJ; displays overlapping activities with DnaJ, but functions under different conditions, probably acting as a molecular chaperone in an adaptive response to environmental stresses other than heat shock. Lacks autonomous chaperone activity; binds native substrates and targets them for recognition by DnaK. Its activity is inhibited by the binding of CbpM. In Escherichia coli O7:K1 (strain IAI39 / ExPEC), this protein is Curved DNA-binding protein.